The chain runs to 180 residues: D-lyxose ketol-isomerase (180 aa).

Lysine 62 serves as a coordination point for D-fructose. Histidine 75 and histidine 77 together coordinate Mn(2+). Position 86 (lysine 86) interacts with D-fructose. Mn(2+) is bound by residues glutamate 88 and histidine 143. Positions 156, 166, and 175 each coordinate D-fructose.

This sequence belongs to the D-lyxose ketol-isomerase family. In terms of assembly, homodimer; disulfide-linked. Stabilized by a disulfide bond between the two monomers of the dimeric enzyme and increased hydrophobicity at the dimer interface. Requires Mn(2+) as cofactor.

The catalysed reaction is D-lyxose = D-xylulose. Functionally, sugar isomerase that catalyzes the reversible isomerization of D-lyxose to D-xylulose. Is highly specific for the substrate D-lyxose, showing less than 2% activity towards mannose and other substrates reported for lyxose isomerases. The polypeptide is D-lyxose ketol-isomerase (Thermofilum sp. (strain ex4484_79)).